A 437-amino-acid chain; its full sequence is Chromosomal replication initiator protein DnaA (437 aa).

The interval 1-82 (MIFPIWKKCL…KIIINIEKKK (82 aa)) is domain I, interacts with DnaA modulators. The segment at 82–101 (KLEKKKCIYKKKNIQIYLHS) is domain II. The tract at residues 102 to 318 (EINKKYQFHN…GILKKIQILS (217 aa)) is domain III, AAA+ region. Residues Gly146, Gly148, Lys149, and Thr150 each coordinate ATP. The interval 319 to 437 (ILNKEKITIN…FIYLFNQLNA (119 aa)) is domain IV, binds dsDNA.

Belongs to the DnaA family. Oligomerizes as a right-handed, spiral filament on DNA at oriC.

The protein resides in the cytoplasm. Its function is as follows. Plays an essential role in the initiation and regulation of chromosomal replication. ATP-DnaA binds to the origin of replication (oriC) to initiate formation of the DNA replication initiation complex once per cell cycle. Binds the DnaA box (a 9 base pair repeat at the origin) and separates the double-stranded (ds)DNA. Forms a right-handed helical filament on oriC DNA; dsDNA binds to the exterior of the filament while single-stranded (ss)DNA is stabiized in the filament's interior. The ATP-DnaA-oriC complex binds and stabilizes one strand of the AT-rich DNA unwinding element (DUE), permitting loading of DNA polymerase. After initiation quickly degrades to an ADP-DnaA complex that is not apt for DNA replication. Binds acidic phospholipids. The polypeptide is Chromosomal replication initiator protein DnaA (Buchnera aphidicola subsp. Cinara cedri (strain Cc)).